Here is a 736-residue protein sequence, read N- to C-terminus: Gingipain R2 (736 aa).

A signal peptide spans 1-24 (MKKNFSRIVSIVAFSSLLGGMAFA). Positions 25–229 (QPAERGRNPQ…SVFMNYEATR (205 aa)) are excised as a propeptide. The Ca(2+) site is built by Asp307, Val329, Asp332, Tyr334, Glu336, Glu390, and His395. His440 (proton donor) is an active-site residue. Catalysis depends on Cys473, which acts as the Nucleophile. Ca(2+) contacts are provided by Phe478, Glu487, Asp521, Glu522, Glu525, His531, Asp613, and Glu639.

Belongs to the peptidase C25 family.

The protein localises to the secreted. The enzyme catalyses Hydrolysis of proteins and small molecule substrates, with a preference for Arg in P1.. Its activity is regulated as follows. Inhibited by human histatin-3 1/24 (histatin-5). Its function is as follows. Thiol protease. Acts synergistically with RgpA to catalyze the maturation of fimbrial subunits, such as FimA. Its proteolytic activity is a major factor in both periodontal tissue destruction and in evasion of host defense mechanisms. This is Gingipain R2 (rgpB) from Porphyromonas gingivalis (strain ATCC BAA-308 / W83).